We begin with the raw amino-acid sequence, 715 residues long: Methionine--tRNA ligase (715 aa).

Residues 17 to 27 (PYANGPIHLGH) carry the 'HIGH' region motif. 4 residues coordinate Zn(2+): cysteine 148, cysteine 151, cysteine 161, and cysteine 164. Residues 359–363 (KMSKS) carry the 'KMSKS' region motif. Position 362 (lysine 362) interacts with ATP. In terms of domain architecture, tRNA-binding spans 614–715 (DLSKVELRVG…KDAKPGDRLK (102 aa)).

This sequence belongs to the class-I aminoacyl-tRNA synthetase family. MetG type 1 subfamily. Homodimer. Zn(2+) is required as a cofactor.

The protein resides in the cytoplasm. It carries out the reaction tRNA(Met) + L-methionine + ATP = L-methionyl-tRNA(Met) + AMP + diphosphate. Its function is as follows. Is required not only for elongation of protein synthesis but also for the initiation of all mRNA translation through initiator tRNA(fMet) aminoacylation. The chain is Methionine--tRNA ligase from Leptospira interrogans serogroup Icterohaemorrhagiae serovar Lai (strain 56601).